A 264-amino-acid polypeptide reads, in one-letter code: Glutamate racemase (264 aa).

Substrate contacts are provided by residues 10–11 (DS) and 42–43 (YG). Catalysis depends on Cys73, which acts as the Proton donor/acceptor. 74-75 (NT) contributes to the substrate binding site. Residue Cys183 is the Proton donor/acceptor of the active site. 184–185 (TH) contacts substrate.

The protein belongs to the aspartate/glutamate racemases family.

It carries out the reaction L-glutamate = D-glutamate. It participates in cell wall biogenesis; peptidoglycan biosynthesis. Its function is as follows. Provides the (R)-glutamate required for cell wall biosynthesis. This chain is Glutamate racemase, found in Streptococcus pyogenes serotype M3 (strain ATCC BAA-595 / MGAS315).